We begin with the raw amino-acid sequence, 231 residues long: Ribose-5-phosphate isomerase A (231 aa).

Substrate is bound by residues 28 to 31 (TGST), 83 to 86 (DGAD), and 96 to 99 (KGGG). Glutamate 105 functions as the Proton acceptor in the catalytic mechanism. Lysine 123 contacts substrate.

The protein belongs to the ribose 5-phosphate isomerase family. In terms of assembly, homodimer.

The catalysed reaction is aldehydo-D-ribose 5-phosphate = D-ribulose 5-phosphate. The protein operates within carbohydrate degradation; pentose phosphate pathway; D-ribose 5-phosphate from D-ribulose 5-phosphate (non-oxidative stage): step 1/1. In terms of biological role, catalyzes the reversible conversion of ribose-5-phosphate to ribulose 5-phosphate. The sequence is that of Ribose-5-phosphate isomerase A from Sinorhizobium fredii (strain NBRC 101917 / NGR234).